Consider the following 355-residue polypeptide: Phosphate acyltransferase (355 aa).

The protein belongs to the PlsX family. In terms of assembly, homodimer. Probably interacts with PlsY.

It localises to the cytoplasm. The enzyme catalyses a fatty acyl-[ACP] + phosphate = an acyl phosphate + holo-[ACP]. It participates in lipid metabolism; phospholipid metabolism. Catalyzes the reversible formation of acyl-phosphate (acyl-PO(4)) from acyl-[acyl-carrier-protein] (acyl-ACP). This enzyme utilizes acyl-ACP as fatty acyl donor, but not acyl-CoA. The chain is Phosphate acyltransferase from Erythrobacter litoralis (strain HTCC2594).